The primary structure comprises 126 residues: Fluoride-specific ion channel FluC (126 aa).

4 consecutive transmembrane segments (helical) span residues 5–25, 34–54, 71–91, and 100–120; these read ILCV…FYFG, YIFI…GFVL, VTGL…NAVF, and FFLN…LGIY. The Na(+) site is built by G76 and T79.

Belongs to the fluoride channel Fluc/FEX (TC 1.A.43) family.

It is found in the cell inner membrane. It catalyses the reaction fluoride(in) = fluoride(out). With respect to regulation, na(+) is not transported, but it plays an essential structural role and its presence is essential for fluoride channel function. Its function is as follows. Fluoride-specific ion channel. Important for reducing fluoride concentration in the cell, thus reducing its toxicity. The protein is Fluoride-specific ion channel FluC of Campylobacter hominis (strain ATCC BAA-381 / DSM 21671 / CCUG 45161 / LMG 19568 / NCTC 13146 / CH001A).